We begin with the raw amino-acid sequence, 730 residues long: MGRRKKMVERVTTLMNEPEKIRNIGIVAHIDHGKTTLSDNLLAGAGMISKELAGRQLFMDSDEEEQERGITIDASNVSMVHTYNNEDYLINLIDTPGHVDFGGDVTRAMRAVDGAVVVVDAVEGTMPQTETVLRQALREHVRPVLFVNKVDRLINELQVDSQEMQVRLGKVIDHVNKLIKNMNPEKFKAGWKVDAAAGTVAFGSALYNWAISVPMMQKTGISFTNVYDYCKAEDMKALAEKCPLHATVLDMVIRFLPNPLEAQKGRVPTIWHGDANSEIGKSMASANADGDLAFMVTDISIDPHAGEVATGRLFSGSFSRGMEVYISGTARKSRVQQVGIFMGPERLEVEKIPAGNIAAVTGLKDAIVGSTVTTLDGMTPFESIRHVSEPVVTVAVEAKHTKDLPKLVEVLRQVAKEDPTLQITLDEETGEHLMAGMGELHLEVIAHRIQRDKNVEITTSKPIVVYRETIKKKIEPVEGKSPNRHNRFYIYVEPLDTAIVEMIKSGDISMNLPELERRQKLIELGMGKEEAKGIVGIHNSNIFIDITKGIQYLNETMELILDGFEEVMRAGPLTREPVANMKCVLVDAKLHEDAIHRGPAQVIPAARQAIQAGMLMAEDCLLEPYQKVFVQVPQLTMGGATKELQGRRGIILNMTTEGDLAIIEARVPVAEMFGFAGEIRSATEGRAMWSTEFGGFDIVPTSIQTEVVGQIRERKGLKRDLPKASDYLSM.

In terms of domain architecture, tr-type G spans 19–260 (EKIRNIGIVA…MVIRFLPNPL (242 aa)). GTP is bound by residues 28–35 (AHIDHGKT), 94–98 (DTPGH), and 148–151 (NKVD). Position 596 is a diphthamide (His-596).

It belongs to the TRAFAC class translation factor GTPase superfamily. Classic translation factor GTPase family. EF-G/EF-2 subfamily.

It localises to the cytoplasm. Functionally, catalyzes the GTP-dependent ribosomal translocation step during translation elongation. During this step, the ribosome changes from the pre-translocational (PRE) to the post-translocational (POST) state as the newly formed A-site-bound peptidyl-tRNA and P-site-bound deacylated tRNA move to the P and E sites, respectively. Catalyzes the coordinated movement of the two tRNA molecules, the mRNA and conformational changes in the ribosome. This chain is Elongation factor 2 (fusA), found in Methanosarcina thermophila.